Here is a 461-residue protein sequence, read N- to C-terminus: Bifunctional protein GlmU (461 aa).

A pyrophosphorylase region spans residues 1–243; that stretch reads MNATVPSAAP…EDELRGINSR (243 aa). Residues 24 to 27, Lys-38, Gln-86, 91 to 92, 112 to 114, Gly-155, Glu-169, Asn-184, and Asn-241 contribute to the UDP-N-acetyl-alpha-D-glucosamine site; these read LAAG, GT, and YGD. Asp-114 lines the Mg(2+) pocket. Asn-241 lines the Mg(2+) pocket. The linker stretch occupies residues 244 to 264; that stretch reads AELAEAEACVQRRLRAAALDG. Positions 265–461 are N-acetyltransferase; that stretch reads GATLVAPETV…AALRRKKEQG (197 aa). UDP-N-acetyl-alpha-D-glucosamine contacts are provided by Arg-330 and Lys-348. His-360 functions as the Proton acceptor in the catalytic mechanism. Residues Tyr-363 and Asn-374 each coordinate UDP-N-acetyl-alpha-D-glucosamine. Acetyl-CoA is bound by residues Ala-377, 383–384, Ser-402, Ala-420, and Arg-437; that span reads NY.

In the N-terminal section; belongs to the N-acetylglucosamine-1-phosphate uridyltransferase family. The protein in the C-terminal section; belongs to the transferase hexapeptide repeat family. Homotrimer. Requires Mg(2+) as cofactor.

Its subcellular location is the cytoplasm. The catalysed reaction is alpha-D-glucosamine 1-phosphate + acetyl-CoA = N-acetyl-alpha-D-glucosamine 1-phosphate + CoA + H(+). It carries out the reaction N-acetyl-alpha-D-glucosamine 1-phosphate + UTP + H(+) = UDP-N-acetyl-alpha-D-glucosamine + diphosphate. Its pathway is nucleotide-sugar biosynthesis; UDP-N-acetyl-alpha-D-glucosamine biosynthesis; N-acetyl-alpha-D-glucosamine 1-phosphate from alpha-D-glucosamine 6-phosphate (route II): step 2/2. It participates in nucleotide-sugar biosynthesis; UDP-N-acetyl-alpha-D-glucosamine biosynthesis; UDP-N-acetyl-alpha-D-glucosamine from N-acetyl-alpha-D-glucosamine 1-phosphate: step 1/1. The protein operates within bacterial outer membrane biogenesis; LPS lipid A biosynthesis. Functionally, catalyzes the last two sequential reactions in the de novo biosynthetic pathway for UDP-N-acetylglucosamine (UDP-GlcNAc). The C-terminal domain catalyzes the transfer of acetyl group from acetyl coenzyme A to glucosamine-1-phosphate (GlcN-1-P) to produce N-acetylglucosamine-1-phosphate (GlcNAc-1-P), which is converted into UDP-GlcNAc by the transfer of uridine 5-monophosphate (from uridine 5-triphosphate), a reaction catalyzed by the N-terminal domain. In Gluconacetobacter diazotrophicus (strain ATCC 49037 / DSM 5601 / CCUG 37298 / CIP 103539 / LMG 7603 / PAl5), this protein is Bifunctional protein GlmU.